Here is a 356-residue protein sequence, read N- to C-terminus: Protein-arginine kinase (356 aa).

The Phosphagen kinase C-terminal domain occupies 24–254 (IVLSSRIRLA…MQLIQQERAA (231 aa)). ATP is bound by residues 27 to 31 (SSRIR), H91, R125, 176 to 180 (RASVM), and 207 to 212 (RGIYGE). An RDXXRA motif of the pArg binding pocket involved in allosteric regulation motif is present at residues 337–342 (RDERRA).

It belongs to the ATP:guanido phosphotransferase family.

It catalyses the reaction L-arginyl-[protein] + ATP = N(omega)-phospho-L-arginyl-[protein] + ADP + H(+). Appears to be allosterically activated by the binding of pArg-containing polypeptides to the pArg-binding pocket localized in the C-terminal domain of McsB. Catalyzes the specific phosphorylation of arginine residues in a large number of proteins. Is part of the bacterial stress response system. Protein arginine phosphorylation has a physiologically important role and is involved in the regulation of many critical cellular processes, such as protein homeostasis, motility, competence, and stringent and stress responses, by regulating gene expression and protein activity. In Halalkalibacterium halodurans (strain ATCC BAA-125 / DSM 18197 / FERM 7344 / JCM 9153 / C-125) (Bacillus halodurans), this protein is Protein-arginine kinase.